A 367-amino-acid polypeptide reads, in one-letter code: Ribosome-binding ATPase YchF (367 aa).

The OBG-type G domain occupies 2–258 (LSAGIVGLPN…LKLEQRQYFL (257 aa)). 11 to 16 (NVGKST) lines the ATP pocket. Residues S15 and T35 each coordinate Mg(2+). One can recognise a TGS domain in the interval 281-364 (NLWSFFTFGK…KDGDVCNFKF (84 aa)).

It belongs to the TRAFAC class OBG-HflX-like GTPase superfamily. OBG GTPase family. YchF/OLA1 subfamily. Mg(2+) is required as a cofactor.

In terms of biological role, ATPase that binds to both the 70S ribosome and the 50S ribosomal subunit in a nucleotide-independent manner. This Mycoplasma genitalium (strain ATCC 33530 / DSM 19775 / NCTC 10195 / G37) (Mycoplasmoides genitalium) protein is Ribosome-binding ATPase YchF.